Consider the following 250-residue polypeptide: Small ribosomal subunit protein uS2 (250 aa).

Belongs to the universal ribosomal protein uS2 family.

This is Small ribosomal subunit protein uS2 from Acidovorax sp. (strain JS42).